Here is a 237-residue protein sequence, read N- to C-terminus: MGRAFEFRKGRKMKRWSAMAKTFTRIGKDIVMAVKEGGPNPDANSRLRAVIQNAKAANMPKDNVERAIKNASNKDTANYKEILFEGYAPHGIAILIETASDNNNRTVANIRSYFNKCNGTMGTQGSVEFMFDHTCNFRIAKDGIDAEELELELIDFGAEEVFEDEDGILIYAPFGSFGALQKELENRGLEILSSGFERIPQITKELTEAQIADVEKLIEKIEEDDDVMNVYHTMKEE.

It belongs to the TACO1 family.

Its subcellular location is the cytoplasm. The protein is Probable transcriptional regulatory protein Fjoh_2560 of Flavobacterium johnsoniae (strain ATCC 17061 / DSM 2064 / JCM 8514 / BCRC 14874 / CCUG 350202 / NBRC 14942 / NCIMB 11054 / UW101) (Cytophaga johnsonae).